The sequence spans 202 residues: uncharacterized protein (202 aa).

The disordered stretch occupies residues 179–202 (FDEQDSTPELPPNYLLDSQKKSQG).

This is an uncharacterized protein from Haemophilus influenzae (strain ATCC 51907 / DSM 11121 / KW20 / Rd).